The sequence spans 1167 residues: Outer membrane protein SlpA (1167 aa).

The N-terminal stretch at 1–22 (MKKSLIALTTALSFGLAAAQTA) is a signal peptide. At 23 to 254 (APVSAPQVPA…RIAALERNAF (232 aa)) the chain is on the periplasmic side. The 64-residue stretch at 29–92 (QVPALTDVPA…DQMRDGETPA (64 aa)) folds into the SLH domain. The chain crosses the membrane as a beta stranded span at residues 255–268 (SVKPSLTIGYSVSR). Residues 269–377 (TSRNFDVDRL…RNGFGFNNLA (109 aa)) lie on the Extracellular side of the membrane. The Cu(2+) site is built by D274, D276, R305, F308, D310, and E381. The beta stranded transmembrane segment at 378 to 403 (RYKEGSTDIGISLGFDTSGQFSQVTS) threads the bilayer. Topologically, residues 404–416 (GTGGSLFSTAGRL) are periplasmic. Residues 417–428 (QVNQIDLNFGLV) form a beta stranded membrane-spanning segment. The Extracellular segment spans residues 429 to 471 (TGLPSDAYVDTNGNGKKDDGEATGRGTYLGSGGTAAILRDPAG). D438, N442, K444, D446, and E449 together coordinate Fe(3+). Residues 472–490 (NVYRPVFFRFKNATTQFSV) traverse the membrane as a beta stranded segment. The Periplasmic portion of the chain corresponds to 491–494 (GNNP). Residues 495 to 500 (VIVTLG) form a beta stranded membrane-spanning segment. Residues 501 to 519 (QQQKFYFSDYVFDNNYDGR) lie on the Extracellular side of the membrane. 2 residues coordinate Cu(2+): D513 and N515. The beta stranded transmembrane segment at 520 to 528 (GDGFTVTVD) threads the bilayer. At 529–540 (GSNVPVIGAWKP) the chain is on the periplasmic side. A beta stranded membrane pass occupies residues 541-549 (QIKGVYGSR). Cu(2+)-binding residues include R549, G551, D553, and G559. The Extracellular portion of the chain corresponds to 550–561 (SGLDGTAEAGYG). A beta stranded transmembrane segment spans residues 562 to 571 (VYYRGVRAQI). Over 572–577 (TPVGTL) the chain is Periplasmic. Residues 578-588 (TAGIHYAQEGR) form a beta stranded membrane-spanning segment. At 589–601 (DMFGAAQNTTSTP) the chain is on the extracellular side. The beta stranded transmembrane segment at 602-615 (SDVTTYGADLHGKA) threads the bilayer. The Periplasmic portion of the chain corresponds to 616 to 617 (FG). Residues 618 to 630 (VELHSEYATSRVR) form a beta stranded membrane-spanning segment. Deinoxanthin is bound at residue S622. Over 631–638 (PNTANAAV) the chain is Extracellular. Residues 639–649 (QTSNAFYARVA) form a beta stranded membrane-spanning segment. The Periplasmic segment spans residues 650–670 (TRKDNLAFDLNTPAAKFGNDT). Residues 671–682 (FGVSLYDLNYRK) traverse the membrane as a beta stranded segment. Topologically, residues 683 to 753 (IDAGYNNVAG…GTVVATNTKI (71 aa)) are extracellular. Cu(2+) is bound at residue G716. A beta stranded membrane pass occupies residues 754 to 766 (GQMGFGVKAAANL). Residues 767–768 (GP) lie on the Periplasmic side of the membrane. Residues 769–779 (VAIGGYYDTST) form a beta stranded membrane-spanning segment. Residues 780 to 788 (GANGDNANR) are Extracellular-facing. The beta stranded transmembrane segment at 789-798 (MTEAGGSAKV) threads the bilayer. At 799-802 (AYSI) the chain is on the periplasmic side. The chain crosses the membrane as a beta stranded span at residues 803–814 (FSLRGTYNTLDS). Topologically, residues 815 to 831 (NRPQIYRDAAGTQIIGD) are extracellular. A beta stranded membrane pass occupies residues 832–843 (AKVRRYAVQADV). Residues 844 to 848 (TPGLG) are Periplasmic-facing. The chain crosses the membrane as a beta stranded span at residues 849-860 (LFVGAYYRDVNV). The Extracellular portion of the chain corresponds to 861–931 (NGVRSTTDRG…DQSRTATCFT (71 aa)). Residues 932-940 (SYGVEAGHA) form a beta stranded membrane-spanning segment. Over 941 to 949 (GDNANALVK) the chain is Periplasmic. A beta stranded transmembrane segment spans residues 950–960 (DLFFRVGYSRV). Residues 961-976 (YVPTTATATTGDFSGS) lie on the Extracellular side of the membrane. Residues 977 to 988 (VTYGDARYDRKV) traverse the membrane as a beta stranded segment. Topologically, residues 989 to 990 (GV) are periplasmic. The beta stranded transmembrane segment at 991–1002 (ANVRLAGSFSTT) threads the bilayer. Residues 1003-1014 (NTQLDSRPAGTR) lie on the Extracellular side of the membrane. Residues 1015–1023 (GAVGLIVRT) form a beta stranded membrane-spanning segment. At 1024-1032 (DPLENVPFR) the chain is on the periplasmic side. A beta stranded membrane pass occupies residues 1033 to 1046 (PQFNGQVGYYTADN). Topologically, residues 1047-1052 (RVAAGN) are extracellular. The beta stranded transmembrane segment at 1053-1066 (YNANATKYGAGVVL) threads the bilayer. Residues 1067-1073 (NDFLLPQ) lie on the Periplasmic side of the membrane. The beta stranded transmembrane segment at 1074-1086 (TKIGVRYDGYMAQ) threads the bilayer. Topologically, residues 1087–1108 (NRQYTPFDGDGTQGYFSDANNN) are extracellular. The chain crosses the membrane as a beta stranded span at residues 1109–1122 (RRTNLNGVYVEGAY). The Periplasmic portion of the chain corresponds to 1123–1124 (QD). The chain crosses the membrane as a beta stranded span at residues 1125-1138 (LIFSYGTYTLSQKD). At 1139 to 1153 (LNGVEYGSGINNGQP) the chain is on the extracellular side. The chain crosses the membrane as a beta stranded span at residues 1154 to 1166 (ARGQTFKISYKVN). Position 1167 (F1167) is a topological domain, periplasmic.

Homotrimer. Part of a heterooligomeric complex resulting in the main assembly named S-layer deinoxanthin-binding complex (SDBC) which is composed of six different subunits, namely SlpA, DR_2310, DR_0505, DR_A0283, DR_A0282, and DR_A0281.

It is found in the cell envelope. It localises to the cell outer membrane. The enzyme catalyses L-arginine(in) = L-arginine(out). It carries out the reaction L-lysine(in) = L-lysine(out). It catalyses the reaction L-glutamate(out) = L-glutamate(in). In terms of biological role, plays an important role in the structural organization and integrity of the cell envelope, bridging the outer membrane to the peptidoglyan layer. Is a highly abundant molecule in the D.radiodurans cell envelope but is not a fundamental component of the S-layer. Binds the carotenoid deinoxanthin, a strong protective antioxidant specific of this bacterium, and could be part of the first lane of defense against UV radiation, especially under desiccation. Appears to be a nonselective channel. Is able to transport charged amino acids such as Lys, Arg and Glu; the large dimension of the pore points toward the physiological importance of the SDBC complex in assisting and allowing the exchange of substances, including nutrients, with the surrounding environment. In Deinococcus radiodurans (strain ATCC 13939 / DSM 20539 / JCM 16871 / CCUG 27074 / LMG 4051 / NBRC 15346 / NCIMB 9279 / VKM B-1422 / R1), this protein is Outer membrane protein SlpA.